Here is a 227-residue protein sequence, read N- to C-terminus: Uridylate kinase (227 aa).

ATP is bound at residue 7-11; the sequence is KISGK. Gly44 serves as a coordination point for UMP. The ATP site is built by Gly45 and Arg49. UMP contacts are provided by residues Asp66 and 114–120; that span reads FQPGQST. ATP contacts are provided by Thr140, Asn141, Tyr146, and Asp149.

This sequence belongs to the UMP kinase family. As to quaternary structure, homohexamer.

It localises to the cytoplasm. The enzyme catalyses UMP + ATP = UDP + ADP. Its pathway is pyrimidine metabolism; CTP biosynthesis via de novo pathway; UDP from UMP (UMPK route): step 1/1. Its activity is regulated as follows. Unlike most bacteria, is not activated by GTP. UTP acts as a competitive inhibitor against both substrates. High concentration of UMP abolishes the inhibition of UTP at low ATP concentrations, indicating that UTP binds to the acceptor site (UMP site). In terms of biological role, catalyzes the reversible phosphorylation of UMP to UDP, with ATP as the most efficient phosphate donor. Is also able to phosphorylate dUMP, although much less efficiently. The protein is Uridylate kinase (pyrH) of Saccharolobus solfataricus (strain ATCC 35092 / DSM 1617 / JCM 11322 / P2) (Sulfolobus solfataricus).